A 149-amino-acid polypeptide reads, in one-letter code: Large ribosomal subunit protein uL15 (149 aa).

Basic residues-rich tracts occupy residues 1–14 (MPTH…HRGH) and 21–30 (RVGKHRKHPG). The segment at 1 to 42 (MPTHLSKTRKHRGHVSAGHGRVGKHRKHPGGRGLAGGQHHHR) is disordered.

It belongs to the universal ribosomal protein uL15 family.

The sequence is that of Large ribosomal subunit protein uL15 from Blumeria hordei (Barley powdery mildew).